Reading from the N-terminus, the 205-residue chain is Holliday junction resolvase RecU (205 aa).

The segment at 1–22 is disordered; the sequence is MAINYPAGTRRRTAQAKNTMRT. Positions 90, 92, 105, and 124 each coordinate Mg(2+).

This sequence belongs to the RecU family. Requires Mg(2+) as cofactor.

Its subcellular location is the cytoplasm. The enzyme catalyses Endonucleolytic cleavage at a junction such as a reciprocal single-stranded crossover between two homologous DNA duplexes (Holliday junction).. Its function is as follows. Endonuclease that resolves Holliday junction intermediates in genetic recombination. Cleaves mobile four-strand junctions by introducing symmetrical nicks in paired strands. Promotes annealing of linear ssDNA with homologous dsDNA. Required for DNA repair, homologous recombination and chromosome segregation. In Leuconostoc citreum (strain KM20), this protein is Holliday junction resolvase RecU.